The following is a 935-amino-acid chain: Peptidyl-glycine alpha-amidating monooxygenase A (935 aa).

The first 36 residues, 1–36 (MASLSSSFLVLFLLFQNSCYCFRSPLSVFKRYEEST), serve as a signal peptide directing secretion. A peptidylglycine alpha-hydroxylating monooxygenase region spans residues 1–390 (MASLSSSFLV…KREEEEVLDQ (390 aa)). The Intragranular segment spans residues 37 to 825 (RSLSNDCLGT…VQESSAGVSF (789 aa)). Cystine bridges form between Cys43-Cys182, Cys77-Cys122, Cys110-Cys127, Cys223-Cys330, and Cys289-Cys311. Residues His103 and His104 each coordinate Cu(2+). The Cu(2+) site is built by His168, His238, His240, and Met310. The tract at residues 362–385 (HGHHHTEAEPEKNTGLQQPKREEE) is disordered. The segment at 391–712 (DVHLEEDTDW…SPSKAEHRSV (322 aa)) is peptidyl-alpha-hydroxyglycine alpha-amidating lyase. Arg426 contacts a protein. 3 NHL repeats span residues 463-504 (SKVL…LGAG), 512-557 (LGRA…FSPN), and 565-609 (GEET…FHAE). Cystine bridges form between Cys526/Cys547 and Cys594/Cys605. Residues Tyr546 and Arg598 each contribute to the a protein site. A glycan (N-linked (GlcNAc...) asparagine) is linked at Asn658. An NHL 4 repeat occupies 662–705 (GDILDTFIPARKNFDMPHDIAAADDGTVYVGDAHANAVWKFSPS). The span at 728–751 (FETHIRSRPKTNESVEKQTQEKQQ) shows a compositional bias: basic and acidic residues. 2 disordered regions span residues 728–764 (FETH…TQEK) and 778–812 (QEKQ…TQEK). An N-linked (GlcNAc...) asparagine glycan is attached at Asn739. Over residues 755–764 (NSAGVSTQEK) the composition is skewed to polar residues. The helical transmembrane segment at 826–846 (VLIITLLIIPIAVLIAIAIFI) threads the bilayer. At 847-935 (RWRKVRMYGG…PIPPAPVSSS (89 aa)) the chain is on the cytoplasmic side. A disordered region spans residues 896 to 935 (KGFDRLSTEGSDQEKDDDDGSDSEEEYSAPPIPPAPVSSS). Positions 909–922 (EKDDDDGSDSEEEY) are enriched in acidic residues. Over residues 925–935 (PPIPPAPVSSS) the composition is skewed to pro residues.

The protein in the C-terminal section; belongs to the peptidyl-alpha-hydroxyglycine alpha-amidating lyase family. In the N-terminal section; belongs to the copper type II ascorbate-dependent monooxygenase family. Monomer. It depends on Zn(2+) as a cofactor. Requires Cu(2+) as cofactor.

The protein resides in the cytoplasmic vesicle. The protein localises to the secretory vesicle membrane. The enzyme catalyses a [peptide]-C-terminal glycine + 2 L-ascorbate + O2 = a [peptide]-C-terminal (2S)-2-hydroxyglycine + 2 monodehydro-L-ascorbate radical + H2O. It carries out the reaction a [peptide]-C-terminal (2S)-2-hydroxyglycine = a [peptide]-C-terminal amide + glyoxylate. Functionally, bifunctional enzyme that catalyzes amidation of the C-terminus of proteins. Alpha-amidation is present at the C-terminus of many endocrine hormones and neuropeptides and is required for their activity. C-terminal amidation also takes place in response to protein fragmentation triggered by oxidative stress, promoting degradation of amidated protein fragments by the proteasome. Alpha-amidation involves two sequential reactions, both of which are catalyzed by separate catalytic domains of the enzyme. The first step, catalyzed by peptidyl alpha-hydroxylating monooxygenase (PHM) domain, is the copper-, ascorbate-, and O2- dependent stereospecific hydroxylation (with S stereochemistry) at the alpha-carbon (C-alpha) of the C-terminal glycine of the peptidylglycine substrate. The second step, catalyzed by the peptidylglycine amidoglycolate lyase (PAL) domain, is the zinc-dependent cleavage of the N-C-alpha bond, producing the alpha-amidated peptide and glyoxylate. The protein is Peptidyl-glycine alpha-amidating monooxygenase A (pam-a) of Xenopus laevis (African clawed frog).